The following is a 229-amino-acid chain: Small ribosomal subunit protein uS3 (229 aa).

Residues 39–107 form the KH type-2 domain; it reads VRKFLEKKLK…PAQINIAEIR (69 aa).

Belongs to the universal ribosomal protein uS3 family. In terms of assembly, part of the 30S ribosomal subunit. Forms a tight complex with proteins S10 and S14.

Its function is as follows. Binds the lower part of the 30S subunit head. Binds mRNA in the 70S ribosome, positioning it for translation. This chain is Small ribosomal subunit protein uS3, found in Shewanella loihica (strain ATCC BAA-1088 / PV-4).